We begin with the raw amino-acid sequence, 63 residues long: Large ribosomal subunit protein uL29 (63 aa).

It belongs to the universal ribosomal protein uL29 family.

In Bacillus cereus (strain ATCC 14579 / DSM 31 / CCUG 7414 / JCM 2152 / NBRC 15305 / NCIMB 9373 / NCTC 2599 / NRRL B-3711), this protein is Large ribosomal subunit protein uL29.